A 290-amino-acid polypeptide reads, in one-letter code: TP53-target gene 5 protein (290 aa).

Over residues 1-13 (MSPSAKKRPKNSR) the composition is skewed to basic residues. 2 disordered regions span residues 1-29 (MSPSAKKRPKNSRVSKMQDEKLRDETEQP) and 114-178 (KLES…RQPL). 3 stretches are compositionally biased toward basic and acidic residues: residues 16 to 26 (KMQDEKLRDET), 114 to 130 (KLESTGDPKKKEYKEWK), and 138 to 167 (RNKEKTSLAAMPRKEKHIEPEVPRTSRDDS).

In terms of assembly, interacts with p53/TP53. As to expression, highly expressed in heart, brain and small intestine. Less abundant in skeletal muscle, spleen, prostate, ovary and colon. A smaller transcript is expressed specifically in the testis.

The protein localises to the cytoplasm. The protein resides in the nucleus. Its function is as follows. May play a significant role in p53/TP53-mediating signaling pathway. This is TP53-target gene 5 protein (TP53TG5) from Homo sapiens (Human).